The sequence spans 201 residues: Large ribosomal subunit protein uL4 (201 aa).

A disordered region spans residues 46–71 (QKTRAEITGSGKKPWRQKGTGRARSG).

The protein belongs to the universal ribosomal protein uL4 family. As to quaternary structure, part of the 50S ribosomal subunit.

In terms of biological role, one of the primary rRNA binding proteins, this protein initially binds near the 5'-end of the 23S rRNA. It is important during the early stages of 50S assembly. It makes multiple contacts with different domains of the 23S rRNA in the assembled 50S subunit and ribosome. Functionally, forms part of the polypeptide exit tunnel. The protein is Large ribosomal subunit protein uL4 of Klebsiella pneumoniae (strain 342).